A 1322-amino-acid chain; its full sequence is Phosphoribosylformylglycinamidine synthase (1322 aa).

Residues Gly-307 to Asp-318 and Ala-678 contribute to the ATP site. Residues Glu-718, Asn-722, and Asp-886 each coordinate Mg(2+). In terms of domain architecture, Glutamine amidotransferase type-1 spans Met-1069–Gly-1322. The active-site Nucleophile is Cys-1162. Catalysis depends on residues His-1287 and Glu-1289.

This sequence in the N-terminal section; belongs to the FGAMS family. Monomer.

The protein resides in the cytoplasm. It catalyses the reaction N(2)-formyl-N(1)-(5-phospho-beta-D-ribosyl)glycinamide + L-glutamine + ATP + H2O = 2-formamido-N(1)-(5-O-phospho-beta-D-ribosyl)acetamidine + L-glutamate + ADP + phosphate + H(+). The protein operates within purine metabolism; IMP biosynthesis via de novo pathway; 5-amino-1-(5-phospho-D-ribosyl)imidazole from N(2)-formyl-N(1)-(5-phospho-D-ribosyl)glycinamide: step 1/2. In terms of biological role, phosphoribosylformylglycinamidine synthase involved in the purines biosynthetic pathway. Catalyzes the ATP-dependent conversion of formylglycinamide ribonucleotide (FGAR) and glutamine to yield formylglycinamidine ribonucleotide (FGAM) and glutamate. The protein is Phosphoribosylformylglycinamidine synthase of Photobacterium profundum (strain SS9).